Reading from the N-terminus, the 441-residue chain is ATP-dependent protease ATPase subunit HslU (441 aa).

Residues Ile-18, 60-65 (GVGKTE), Asp-254, Glu-319, and Arg-391 each bind ATP.

It belongs to the ClpX chaperone family. HslU subfamily. As to quaternary structure, a double ring-shaped homohexamer of HslV is capped on each side by a ring-shaped HslU homohexamer. The assembly of the HslU/HslV complex is dependent on binding of ATP.

The protein localises to the cytoplasm. Functionally, ATPase subunit of a proteasome-like degradation complex; this subunit has chaperone activity. The binding of ATP and its subsequent hydrolysis by HslU are essential for unfolding of protein substrates subsequently hydrolyzed by HslV. HslU recognizes the N-terminal part of its protein substrates and unfolds these before they are guided to HslV for hydrolysis. The protein is ATP-dependent protease ATPase subunit HslU of Actinobacillus succinogenes (strain ATCC 55618 / DSM 22257 / CCUG 43843 / 130Z).